The sequence spans 566 residues: Serine/threonine-protein kinase PknE (566 aa).

The Cytoplasmic portion of the chain corresponds to M1–W337. S7 carries the phosphoserine; by autocatalysis modification. At T11 the chain carries Phosphothreonine; by autocatalysis. Positions Y16 to L275 constitute a Protein kinase domain. Residues V22 to V30 and K45 each bind ATP. A phosphothreonine; by autocatalysis mark is found at T50 and T59. Catalysis depends on D139, which acts as the Proton acceptor. 3 positions are modified to phosphothreonine; by autocatalysis: T170, T175, and T178. Residues P296–P330 form a disordered region. Residues L338–L358 traverse the membrane as a helical segment. At A359–G566 the chain is on the extracellular side.

This sequence belongs to the protein kinase superfamily. Ser/Thr protein kinase family. Post-translationally, autophosphorylated on serine and threonine residues. Dephosphorylated by PstP.

It is found in the cell membrane. The enzyme catalyses L-seryl-[protein] + ATP = O-phospho-L-seryl-[protein] + ADP + H(+). It catalyses the reaction L-threonyl-[protein] + ATP = O-phospho-L-threonyl-[protein] + ADP + H(+). The sequence is that of Serine/threonine-protein kinase PknE (pknE) from Mycobacterium bovis (strain ATCC BAA-935 / AF2122/97).